The chain runs to 227 residues: PKHD-type hydroxylase ACICU_00484 (227 aa).

Residues 78 to 178 (DIIPPLFNRY…RIASFFWVQS (101 aa)) enclose the Fe2OG dioxygenase domain. Positions 96, 98, and 159 each coordinate Fe cation. 2-oxoglutarate is bound at residue arginine 169.

Requires Fe(2+) as cofactor. L-ascorbate serves as cofactor.

The protein is PKHD-type hydroxylase ACICU_00484 of Acinetobacter baumannii (strain ACICU).